Reading from the N-terminus, the 138-residue chain is Nucleoside diphosphate kinase (138 aa).

Residues K9, F57, R85, T91, R102, and N112 each contribute to the ATP site. H115 (pros-phosphohistidine intermediate) is an active-site residue.

This sequence belongs to the NDK family. As to quaternary structure, homotetramer. Mg(2+) is required as a cofactor.

Its subcellular location is the cytoplasm. The enzyme catalyses a 2'-deoxyribonucleoside 5'-diphosphate + ATP = a 2'-deoxyribonucleoside 5'-triphosphate + ADP. It carries out the reaction a ribonucleoside 5'-diphosphate + ATP = a ribonucleoside 5'-triphosphate + ADP. Major role in the synthesis of nucleoside triphosphates other than ATP. The ATP gamma phosphate is transferred to the NDP beta phosphate via a ping-pong mechanism, using a phosphorylated active-site intermediate. In Desulforapulum autotrophicum (strain ATCC 43914 / DSM 3382 / VKM B-1955 / HRM2) (Desulfobacterium autotrophicum), this protein is Nucleoside diphosphate kinase.